We begin with the raw amino-acid sequence, 162 residues long: Caveolin-2 (162 aa).

Residues 1–86 (MGLETEKADV…FEISKYVMYK (86 aa)) are Cytoplasmic-facing. Y19 bears the Phosphotyrosine; by SRC mark. Phosphoserine is present on residues S20 and S23. Y27 is modified (phosphotyrosine; by SRC). Position 36 is a phosphoserine (S36). The helical intramembrane region spans 87 to 107 (FLTVFLAIPLAFIAGILFATL). Residues 108-162 (SCLHIWILMPFVKTCLMVLPSVQTIWKSVTDVFIAPLCTSVGRSFSSVSLQLSQD) lie on the Cytoplasmic side of the membrane.

This sequence belongs to the caveolin family. As to quaternary structure, monomer or homodimer. Interacts with CAV1; the interaction forms a stable heterooligomeric complex that is required for targeting to lipid rafts and for caveolae formation. Tyrosine phosphorylated forms do not form heterooligomers with the Tyr-19-phosphorylated form existing as a monomer or dimer, and the Tyr-27-form as a monomer only. Interacts (tyrosine phosphorylated form) with the SH2 domain-containing proteins, RASA1, NCK1 and SRC. Interacts (tyrosine phosphorylated form) with INSR, the interaction (Tyr-27-phosphorylated form) is increased on insulin stimulation. Interacts (Tyr-19 phosphorylated form) with MAPK1 (phosphorylated form); the interaction, promoted by insulin, leads to nuclear location and MAPK1 activation. Interacts with STAT3; the interaction is increased on insulin-induced tyrosine phosphorylation leading to STAT activation. In terms of processing, phosphorylated on serine and tyrosine residues. CAV1 promotes phosphorylation on Ser-23 which then targets the complex to the plasma membrane, lipid rafts and caveolae. Phosphorylation on Ser-36 appears to modulate mitosis in endothelial cells. Phosphorylation on both Tyr-19 and Tyr-27 is required for insulin-induced 'Ser-727' phosphorylation of STAT3 and its activation. Phosphorylation on Tyr-19 is required for insulin-induced phosphorylation of MAPK1 and DNA binding of STAT3. Tyrosine phosphorylation is induced by both EGF and insulin (By. similarity).

It is found in the nucleus. Its subcellular location is the cytoplasm. The protein localises to the golgi apparatus membrane. The protein resides in the cell membrane. It localises to the membrane. It is found in the caveola. In terms of biological role, may act as a scaffolding protein within caveolar membranes. Interacts directly with G-protein alpha subunits and can functionally regulate their activity. Acts as an accessory protein in conjunction with CAV1 in targeting to lipid rafts and driving caveolae formation. The Ser-36 phosphorylated form has a role in modulating mitosis in endothelial cells. Positive regulator of cellular mitogenesis of the MAPK signaling pathway. Required for the insulin-stimulated nuclear translocation and activation of MAPK1 and STAT3, and the subsequent regulation of cell cycle progression. The sequence is that of Caveolin-2 (CAV2) from Chlorocebus aethiops (Green monkey).